Consider the following 124-residue polypeptide: UPF0235 protein (124 aa).

The interval methionine 1–asparagine 22 is disordered.

Belongs to the UPF0235 family.

The polypeptide is UPF0235 protein (Dictyostelium discoideum (Social amoeba)).